A 903-amino-acid polypeptide reads, in one-letter code: Protein translocase subunit SecA (903 aa).

ATP contacts are provided by residues Q87, 105-109 (GEGKT), and D512. Residues C887, C889, C898, and H899 each contribute to the Zn(2+) site.

This sequence belongs to the SecA family. As to quaternary structure, monomer and homodimer. Part of the essential Sec protein translocation apparatus which comprises SecA, SecYEG and auxiliary proteins SecDF-YajC and YidC. The cofactor is Zn(2+).

It localises to the cell inner membrane. It is found in the cytoplasm. It catalyses the reaction ATP + H2O + cellular proteinSide 1 = ADP + phosphate + cellular proteinSide 2.. Functionally, part of the Sec protein translocase complex. Interacts with the SecYEG preprotein conducting channel. Has a central role in coupling the hydrolysis of ATP to the transfer of proteins into and across the cell membrane, serving both as a receptor for the preprotein-SecB complex and as an ATP-driven molecular motor driving the stepwise translocation of polypeptide chains across the membrane. This is Protein translocase subunit SecA from Photorhabdus laumondii subsp. laumondii (strain DSM 15139 / CIP 105565 / TT01) (Photorhabdus luminescens subsp. laumondii).